The chain runs to 600 residues: Lamin-B2 (600 aa).

Residues 2–27 (SGTPIRGTPGGTPLSPTRISRLQEKE) form a head region. S16 carries the phosphoserine; by CDK1 modification. The 357-residue stretch at 25-381 (EKEELRQLND…KLLEGEEERL (357 aa)) folds into the IF rod domain. The interval 28-64 (ELRQLNDRLAVYIDRVRALELENDRLLVKISEKEEVT) is coil 1A. Positions 75–212 (YESELADARR…NVFEEEIRET (138 aa)) are coil 1B. Positions 237-379 (QALEDLRNQH…YRKLLEGEEE (143 aa)) are coil 2. 2 disordered regions span residues 377-449 (EEER…QMSQ) and 568-600 (ENEEEEDEADFGEEDLFNQQGDPRTTSRGCLVM). The tail stretch occupies residues 380-600 (RLKLSPSPSS…RTTSRGCLVM (221 aa)). Over residues 383–410 (LSPSPSSRVTVSRATSSSSSSSTSLVRS) the composition is skewed to low complexity. Position 386 is a phosphoserine (S386). The short motif at 414-419 (KRRRIE) is the Nuclear localization signal element. An LTD domain is found at 445 to 562 (FQMSQQASAT…EEVAVRTVTK (118 aa)). Acidic residues predominate over residues 569–583 (NEEEEDEADFGEEDL). A compositionally biased stretch (polar residues) spans 584 to 600 (FNQQGDPRTTSRGCLVM). C597 is modified (cysteine methyl ester). C597 carries S-farnesyl cysteine lipidation. Residues 598–600 (LVM) constitute a propeptide, removed in mature form.

Belongs to the intermediate filament family. Homodimer. Lamin dimers then assemble into dimeric head-to-tail polymers. Ultimately, two head-to-tail polymers assemble laterally into a protofilament with a uniformly shaped rod of 3.5 nm in diameter. In terms of processing, phosphorylation plays a key role in lamin organization, subcellular localization and nuclear envelope disintegration. Phosphorylation by CDK1 at Ser-16 at the onset of mitosis drives lamin disassembly and nuclear envelope breakdown.

It localises to the nucleus lamina. Its subcellular location is the nucleus envelope. The protein localises to the nucleus. It is found in the nucleoplasm. The protein resides in the nucleus matrix. Functionally, lamins are intermediate filament proteins that assemble into a filamentous meshwork, and which constitute the major components of the nuclear lamina, a fibrous layer on the nucleoplasmic side of the inner nuclear membrane. Lamins provide a framework for the nuclear envelope, bridging the nuclear envelope and chromatin. Plays an important role in nuclear assembly, chromatin organization, nuclear membrane and telomere dynamics. The polypeptide is Lamin-B2 (LMNB2) (Gallus gallus (Chicken)).